The following is a 129-amino-acid chain: MRLLHHGEYGTKLIGGKCSIDGKLGHPCPLSRRRKKHLREKEMGPQYVRMYGPKRKAIIRTGNPDDGINLPDTGRGTLTAATIWSRAYHSNYSYLVRPKVVTLSKHRELMTTFLLYVLYVCIYISAFIK.

The N-linked (GlcNAc...) asparagine glycan is linked to Asn-91. A helical membrane pass occupies residues 109 to 128; sequence LMTTFLLYVLYVCIYISAFI.

It is found in the membrane. Functionally, involved in K1 killer toxin resistance. This Saccharomyces cerevisiae (strain ATCC 204508 / S288c) (Baker's yeast) protein is Protein FYV12 (FYV12).